Consider the following 295-residue polypeptide: MSTANPETPNSTISREASTQSSSAATSQGYILPEGKIMPNTVFVGGIDVRMDETEIRSFFARYGSVKEVKIITDRTGVSKGYGFVSFFNDVDVQKIVESQINFHGKKLKLGPAIRKQNLCAYHVQPRPLVFNHPPPPQFQNVWTNPNTETYMQPTTTMNPITQYVQAYPTYPNSPVQVITGYQLPVYNYQMPPQWPVGEQRSYVVPPAYSAVNYHCNEVDPGAEVVPNECSVHEATPPSGNGPQKKSVDRSIQTVVSCLFNPENRLRNSVVTQDDYFKDKRVHHFRRSRAMLKSV.

The segment covering 1-10 has biased composition (polar residues); that stretch reads MSTANPETPN. The disordered stretch occupies residues 1–25; it reads MSTANPETPNSTISREASTQSSSAA. Positions 11 to 25 are enriched in low complexity; the sequence is STISREASTQSSSAA. In terms of domain architecture, RRM spans 40-115; sequence NTVFVGGIDV…KKLKLGPAIR (76 aa). A homodimerization region spans residues 80-132; that stretch reads KGYGFVSFFNDVDVQKIVESQINFHGKKLKLGPAIRKQNLCAYHVQPRPLVFN. One can recognise a DAZ domain in the interval 167-190; that stretch reads AYPTYPNSPVQVITGYQLPVYNYQ. Phosphotyrosine is present on Y276.

The protein belongs to the RRM DAZ family. Homodimer and heterodimer. Multiple DAZL RRMs can bind to a single RNA containing multiple GUU triplets. Forms a heterodimer with DAZ. Interacts with BOLL, DAZAP1 and DAZAP2. Interacts with PUM2. Testis specific.

Its subcellular location is the cytoplasm. It localises to the nucleus. Its function is as follows. RNA-binding protein, which is essential for gametogenesis in both males and females. Plays a central role during spermatogenesis. Acts by binding to the 3'-UTR of mRNA, specifically recognizing GUU triplets, and thereby regulating the translation of key transcripts. This is Deleted in azoospermia-like (DAZL) from Homo sapiens (Human).